The chain runs to 1375 residues: Ubiquitin carboxyl-terminal hydrolase 47 (1375 aa).

Lysine 122 is subject to N6-acetyllysine. Residues 188–564 (VGLVNQAMTC…NAYMLIYRLK (377 aa)) form the USP domain. The active-site Nucleophile is the cysteine 197. A disordered region spans residues 425–452 (DEKSPQTESCTDSGAENEGSCHSDQMSN). A compositionally biased stretch (polar residues) spans 430–452 (QTESCTDSGAENEGSCHSDQMSN). The active-site Proton acceptor is the histidine 503. A Phosphoserine modification is found at serine 832. Disordered stretches follow at residues 840 to 859 (TAYQKAGGDSGNVDDDCERV), 880 to 968 (LKSL…SHSS), and 983 to 1024 (NGLD…ESGK). The span at 882 to 899 (SLSLQQQQDGDNGDSSKS) shows a compositional bias: low complexity. Serine 910 carries the post-translational modification Phosphoserine. Basic and acidic residues predominate over residues 912–928 (LNERDSSASVDNRELEQ). The span at 929-938 (HIQTSDPENF) shows a compositional bias: polar residues. Serine 933 is subject to Phosphoserine. Positions 940-950 (SEERSDSDVNN) are enriched in basic and acidic residues. Residues 953–968 (STSSVDSDILSSSHSS) show a composition bias toward low complexity. The segment covering 997-1006 (KANEGKKETW) has biased composition (basic and acidic residues). Residues 1007–1020 (DTAEEDSGTDSEYD) show a composition bias toward acidic residues. Position 1013 is a phosphoserine (serine 1013). A Phosphothreonine modification is found at threonine 1015. At serine 1017 the chain carries Phosphoserine.

This sequence belongs to the peptidase C19 family. In terms of assembly, interacts with BTRC and FBXW11. Interacts with POLB. As to expression, expressed in skeletal muscle, heart and testis.

It localises to the cytoplasm. The catalysed reaction is Thiol-dependent hydrolysis of ester, thioester, amide, peptide and isopeptide bonds formed by the C-terminal Gly of ubiquitin (a 76-residue protein attached to proteins as an intracellular targeting signal).. Functionally, ubiquitin-specific protease that specifically deubiquitinates monoubiquitinated DNA polymerase beta (POLB), stabilizing POLB thereby playing a role in base-excision repair (BER). Acts as a regulator of cell growth and genome integrity. May also indirectly regulate CDC25A expression at a transcriptional level. This Homo sapiens (Human) protein is Ubiquitin carboxyl-terminal hydrolase 47 (USP47).